The chain runs to 506 residues: Acetaldehyde dehydrogenase 2 (506 aa).

NAD(+) is bound at residue 240–245 (GETTTG). Active-site residues include E262 and C301.

Belongs to the aldehyde dehydrogenase family.

The catalysed reaction is an aldehyde + NAD(+) + H2O = a carboxylate + NADH + 2 H(+). Its pathway is alcohol metabolism; ethanol degradation; acetate from ethanol: step 2/2. It functions in the pathway ketone degradation; acetoin degradation. Involved in the catabolism of acetoin and ethanol. This Cupriavidus necator (strain ATCC 17699 / DSM 428 / KCTC 22496 / NCIMB 10442 / H16 / Stanier 337) (Ralstonia eutropha) protein is Acetaldehyde dehydrogenase 2 (acoD).